The following is a 177-amino-acid chain: uncharacterized protein (177 aa).

2 stretches are compositionally biased toward low complexity: residues 78–93 (NNNNNNNNTINNNTNN) and 120–130 (SDVNSNNNNGN). The disordered stretch occupies residues 78–146 (NNNNNNNNTI…NKKLKKDGTN (69 aa)). Basic residues predominate over residues 131–146 (HQKKKINKKLKKDGTN).

This is an uncharacterized protein from Dictyostelium discoideum (Social amoeba).